Reading from the N-terminus, the 268-residue chain is Tryptophan synthase alpha chain (268 aa).

Residues glutamate 49 and aspartate 60 each act as proton acceptor in the active site.

It belongs to the TrpA family. As to quaternary structure, tetramer of two alpha and two beta chains.

The enzyme catalyses (1S,2R)-1-C-(indol-3-yl)glycerol 3-phosphate + L-serine = D-glyceraldehyde 3-phosphate + L-tryptophan + H2O. Its pathway is amino-acid biosynthesis; L-tryptophan biosynthesis; L-tryptophan from chorismate: step 5/5. Functionally, the alpha subunit is responsible for the aldol cleavage of indoleglycerol phosphate to indole and glyceraldehyde 3-phosphate. The chain is Tryptophan synthase alpha chain from Citrobacter koseri (strain ATCC BAA-895 / CDC 4225-83 / SGSC4696).